We begin with the raw amino-acid sequence, 202 residues long: Peptidyl-tRNA hydrolase (202 aa).

Tyrosine 22 is a tRNA binding site. Histidine 27 acts as the Proton acceptor in catalysis. Positions 69, 71, and 117 each coordinate tRNA.

Belongs to the PTH family. As to quaternary structure, monomer.

It is found in the cytoplasm. The catalysed reaction is an N-acyl-L-alpha-aminoacyl-tRNA + H2O = an N-acyl-L-amino acid + a tRNA + H(+). Hydrolyzes ribosome-free peptidyl-tRNAs (with 1 or more amino acids incorporated), which drop off the ribosome during protein synthesis, or as a result of ribosome stalling. In terms of biological role, catalyzes the release of premature peptidyl moieties from peptidyl-tRNA molecules trapped in stalled 50S ribosomal subunits, and thus maintains levels of free tRNAs and 50S ribosomes. This chain is Peptidyl-tRNA hydrolase, found in Thiobacillus denitrificans (strain ATCC 25259 / T1).